The chain runs to 231 residues: DNA mismatch repair protein MutH (231 aa).

The protein belongs to the MutH family.

The protein localises to the cytoplasm. Functionally, sequence-specific endonuclease that cleaves unmethylated GATC sequences. It is involved in DNA mismatch repair. The sequence is that of DNA mismatch repair protein MutH from Pectobacterium atrosepticum (strain SCRI 1043 / ATCC BAA-672) (Erwinia carotovora subsp. atroseptica).